We begin with the raw amino-acid sequence, 754 residues long: 1,4-alpha-glucan branching enzyme GlgB (754 aa).

The active-site Nucleophile is the Asp431. Catalysis depends on Glu484, which acts as the Proton donor.

It belongs to the glycosyl hydrolase 13 family. GlgB subfamily. As to quaternary structure, monomer.

The catalysed reaction is Transfers a segment of a (1-&gt;4)-alpha-D-glucan chain to a primary hydroxy group in a similar glucan chain.. Its pathway is glycan biosynthesis; glycogen biosynthesis. Catalyzes the formation of the alpha-1,6-glucosidic linkages in glycogen by scission of a 1,4-alpha-linked oligosaccharide from growing alpha-1,4-glucan chains and the subsequent attachment of the oligosaccharide to the alpha-1,6 position. This is 1,4-alpha-glucan branching enzyme GlgB from Prochlorococcus marinus (strain MIT 9301).